A 529-amino-acid polypeptide reads, in one-letter code: Delayed-rectifier potassium channel regulatory subunit KCNS1 (529 aa).

Topologically, residues 1-217 (MLMLLVRGTR…LTMENPGYSL (217 aa)) are cytoplasmic. The helical transmembrane segment at 218 to 239 (PSKLFSCVSISVVLASIAAMCI) threads the bilayer. Residues 240 to 270 (HSLPEYQAREAAAAVAAVAAGRSPEGVRDDP) lie on the Extracellular side of the membrane. The chain crosses the membrane as a helical span at residues 271-293 (VLRRLEYFCIAWFSFEVSSRLLL). Residues 294–304 (APSTRNFFCHP) lie on the Cytoplasmic side of the membrane. The chain crosses the membrane as a helical span at residues 305-322 (LNLIDIVSVLPFYLTLLA). Residues 323-340 (GVALGDQGGTGGKELGHL) are Extracellular-facing. Residues 341-361 (GKVVQVFRLMRIFRVLKLARH) form a helical; Voltage-sensor membrane-spanning segment. The Cytoplasmic portion of the chain corresponds to 362-376 (STGLRSLGATLKHSY). A helical transmembrane segment spans residues 377–398 (REVGILLLYLAVGVSVFSGVAY). The Extracellular portion of the chain corresponds to 399-411 (TAEKEEDVGFNTI). Residues 412-423 (PACWWWGTVSMT) constitute an intramembrane region (helical). A Selectivity filter motif is present at residues 424–429 (TVGYGD). An intramembrane segment occupies 424 to 431 (TVGYGDVV). Topologically, residues 432 to 438 (PVTVAGK) are extracellular. Residues 439–467 (LAASGCILGGILVVALPITIIFNKFSHFY) form a helical membrane-spanning segment. Topologically, residues 468-529 (RRQKALEAAV…PSEPPHPQMY (62 aa)) are cytoplasmic. Residues 500–529 (LETSREISQEGRSADLETQAPSEPPHPQMY) form a disordered region. Basic and acidic residues predominate over residues 502–514 (TSREISQEGRSAD).

This sequence belongs to the potassium channel family. S (TC 1.A.1.2) subfamily. Kv9.1/KCNS1 sub-subfamily. As to quaternary structure, heterotetramer with KCNB1. Heterotetramer with KCNB2. Does not form homomultimers.

The protein localises to the cell membrane. In terms of biological role, potassium channel regulatory subunit that modulate the delayed rectifier voltage-gated potassium channel activity of KCNB1 and KCNB2 by altering their kinetics, expression levels, and shifting the half-inactivation potential to more polarized values. While it does not form functional channels on its own, it can form functional heterotetrameric channels with KCNB1 and KCNB2. Each regulatory subunit has unique regulatory properties that can lead to extensive inhibition, significant changes in kinetics, and/or substantial shifts in the voltage dependencies of the inactivation process. The sequence is that of Delayed-rectifier potassium channel regulatory subunit KCNS1 from Colobus guereza (Mantled guereza).